The chain runs to 211 residues: Large ribosomal subunit protein uL3 (211 aa).

Belongs to the universal ribosomal protein uL3 family. Part of the 50S ribosomal subunit. Forms a cluster with proteins L14 and L19.

One of the primary rRNA binding proteins, it binds directly near the 3'-end of the 23S rRNA, where it nucleates assembly of the 50S subunit. In Desulfatibacillum aliphaticivorans, this protein is Large ribosomal subunit protein uL3.